The sequence spans 892 residues: Translation initiation factor IF-2 (892 aa).

Residues 88–305 form a disordered region; that stretch reads KKRTFVKRDP…SLQQGFQKPA (218 aa). Basic and acidic residues-rich tracts occupy residues 93–159 and 166–216; these read VKRD…KDKV and DMTK…EENK. A compositionally biased stretch (basic residues) spans 254–269; sequence GRGRNAKAARPAKKGK. The span at 270-282 shows a compositional bias: basic and acidic residues; that stretch reads HAESKADREEARA. The region spanning 391–560 is the tr-type G domain; the sequence is PRAPVVTIMG…LLQAEVLELK (170 aa). The interval 400–407 is G1; it reads GHVDHGKT. 400-407 contacts GTP; it reads GHVDHGKT. The interval 425–429 is G2; the sequence is GITQH. The segment at 446-449 is G3; sequence DTPG. Residues 446–450 and 500–503 contribute to the GTP site; these read DTPGH and NKID. Positions 500-503 are G4; it reads NKID. The interval 536–538 is G5; that stretch reads SAK.

This sequence belongs to the TRAFAC class translation factor GTPase superfamily. Classic translation factor GTPase family. IF-2 subfamily.

The protein localises to the cytoplasm. In terms of biological role, one of the essential components for the initiation of protein synthesis. Protects formylmethionyl-tRNA from spontaneous hydrolysis and promotes its binding to the 30S ribosomal subunits. Also involved in the hydrolysis of GTP during the formation of the 70S ribosomal complex. The polypeptide is Translation initiation factor IF-2 (Salmonella paratyphi A (strain ATCC 9150 / SARB42)).